A 203-amino-acid chain; its full sequence is UPF0637 protein EF_3078 (203 aa).

The protein belongs to the UPF0637 family.

The sequence is that of UPF0637 protein EF_3078 from Enterococcus faecalis (strain ATCC 700802 / V583).